The chain runs to 580 residues: PTS system fructose-specific EIIB'BC component (580 aa).

PTS EIIB type-2 domains are found at residues 3–100 (MKIA…QAAE) and 124–221 (KKIV…NAFA). Active-site phosphocysteine intermediate; for EIIB activity residues include Cys11 and Cys132. Phosphocysteine; by EIIA occurs at positions 11 and 132. The PTS EIIC type-2 domain maps to 244–579 (VYKHLMTGVS…KKSAQAKAVA (336 aa)). Helical transmembrane passes span 254–274 (HMLPVVVAGGLIIALSFVFGI), 292–312 (GGSAFALMIPVLAGYIAFSIA), 322–342 (IGGMLASSTGAGFLGGIVAGF), 367–387 (ILIIPFIASLFTGLVMIYVVG), 408–428 (NAILLGIVLGAMMCFDLGGPV), 448–468 (MAAIMAAGMVPALGMGLATFI), 480–500 (AGKASFVLGLCFISEGAIPFA), 507–527 (VIPACMVGGAVTGALSMLFGA), and 537–557 (FVLLIPNAISPVLLYLVAIAV).

It localises to the cell inner membrane. It catalyses the reaction D-fructose(out) + N(pros)-phospho-L-histidyl-[protein] = D-fructose 1-phosphate(in) + L-histidyl-[protein]. The phosphoenolpyruvate-dependent sugar phosphotransferase system (sugar PTS), a major carbohydrate active transport system, catalyzes the phosphorylation of incoming sugar substrates concomitantly with their translocation across the cell membrane. The enzyme II FruAB PTS system is involved in fructose transport. The chain is PTS system fructose-specific EIIB'BC component from Vibrio cholerae serotype O1 (strain ATCC 39315 / El Tor Inaba N16961).